The following is a 199-amino-acid chain: Probable thymidylate kinase (199 aa).

Gly7–Thr14 contributes to the ATP binding site.

The protein belongs to the thymidylate kinase family.

It carries out the reaction dTMP + ATP = dTDP + ADP. The polypeptide is Probable thymidylate kinase (Halobacterium salinarum (strain ATCC 29341 / DSM 671 / R1)).